The following is a 60-amino-acid chain: Large ribosomal subunit protein eL37 (60 aa).

Zn(2+)-binding residues include cysteine 19, cysteine 22, cysteine 34, and cysteine 37. The segment at cysteine 19–cysteine 37 adopts a C4-type zinc-finger fold.

The protein belongs to the eukaryotic ribosomal protein eL37 family. Zn(2+) serves as cofactor.

Binds to the 23S rRNA. The chain is Large ribosomal subunit protein eL37 from Methanospirillum hungatei JF-1 (strain ATCC 27890 / DSM 864 / NBRC 100397 / JF-1).